A 415-amino-acid chain; its full sequence is UDP-N-acetylglucosamine 1-carboxyvinyltransferase 1 (415 aa).

23-24 (KN) is a binding site for phosphoenolpyruvate. Arginine 92 lines the UDP-N-acetyl-alpha-D-glucosamine pocket. Cysteine 116 (proton donor) is an active-site residue. Cysteine 116 bears the 2-(S-cysteinyl)pyruvic acid O-phosphothioketal mark. Residues 121–125 (RPIDL), aspartate 304, and valine 326 each bind UDP-N-acetyl-alpha-D-glucosamine.

This sequence belongs to the EPSP synthase family. MurA subfamily.

The protein localises to the cytoplasm. The enzyme catalyses phosphoenolpyruvate + UDP-N-acetyl-alpha-D-glucosamine = UDP-N-acetyl-3-O-(1-carboxyvinyl)-alpha-D-glucosamine + phosphate. The protein operates within cell wall biogenesis; peptidoglycan biosynthesis. Its function is as follows. Cell wall formation. Adds enolpyruvyl to UDP-N-acetylglucosamine. The protein is UDP-N-acetylglucosamine 1-carboxyvinyltransferase 1 of Caldanaerobacter subterraneus subsp. tengcongensis (strain DSM 15242 / JCM 11007 / NBRC 100824 / MB4) (Thermoanaerobacter tengcongensis).